We begin with the raw amino-acid sequence, 414 residues long: Cell division protein FtsA (414 aa).

It belongs to the FtsA/MreB family. In terms of assembly, self-interacts. Interacts with FtsZ.

It localises to the cell inner membrane. Its function is as follows. Cell division protein that is involved in the assembly of the Z ring. May serve as a membrane anchor for the Z ring. The sequence is that of Cell division protein FtsA from Neisseria meningitidis serogroup B (strain ATCC BAA-335 / MC58).